Reading from the N-terminus, the 309-residue chain is Zinc transporter ZIP2 (309 aa).

Topologically, residues 1 to 8 are extracellular; sequence MEQLLGIK. Residues 9–29 traverse the membrane as a helical segment; it reads LGCLFALLALTLGCGLTPICF. The Cytoplasmic portion of the chain corresponds to 30–46; sequence KWFQIDAARGHHRLVLR. Residues 47-67 form a helical membrane-spanning segment; it reads LLGCISAGVFLGAGFMHMTAE. The Extracellular portion of the chain corresponds to 68–103; sequence ALEEIESQIQKFMVQNRSASERNSSGDADSAHMEYP. A helical transmembrane segment spans residues 104–124; it reads YGELIISLGFFFVFFLESLAL. Residues 125–164 lie on the Cytoplasmic side of the membrane; it reads QCCPGAAGGSTVQDEEWGGAHIFELHSHGHLPSPSKGPLR. Residues 165–185 traverse the membrane as a helical segment; that stretch reads ALVLLLSLSFHSVFEGLAVGL. His-175 and Glu-179 together coordinate Zn(2+). Residues 186–189 lie on the Extracellular side of the membrane; the sequence is QPTV. The helical transmembrane segment at 190-210 threads the bilayer; that stretch reads AATVQLCLAVLAHKGLVVFGV. His-202 is a binding site for Zn(2+). Topologically, residues 211 to 224 are cytoplasmic; that stretch reads GMRLVHLGTSSRWA. Residues 225–245 traverse the membrane as a helical segment; the sequence is VFSILLLALMSPLGLAVGLAV. At 246–258 the chain is on the extracellular side; that stretch reads TGGDSEGGRGLAQ. The helical transmembrane segment at 259 to 279 threads the bilayer; that stretch reads AVLEGVAAGTFLYVTFLEILP. A Zn(2+)-binding site is contributed by Glu-276. Over 280-288 the chain is Cytoplasmic; the sequence is RELASPEAP. A helical transmembrane segment spans residues 289-309; sequence LAKWSCVAAGFAFMAFIALWA.

This sequence belongs to the ZIP transporter (TC 2.A.5) family. In terms of tissue distribution, expressed only in prostate and uterine epithelial cells.

It is found in the cell membrane. It carries out the reaction Zn(2+)(in) = Zn(2+)(out). The catalysed reaction is Cd(2+)(in) = Cd(2+)(out). Its activity is regulated as follows. Activity is increased at acidic pH (6.5). Inhibited in the presence of high extracellular K(+). Transporter for the divalent cation Zn(2+). Mediates the influx of Zn(2+) into cells from extracellular space. The Zn(2+) uniporter activity is independent of H(+)-driving force, but is modulated by extracellular pH and membrane potential. Also transports other divalent cations Zn(2+), Cd2(+), Cu2(+), Co2(+) in the order of decreasing affinity, respectively. In the skin, aids in the differentiation of keratinocytes in the epidermis. The chain is Zinc transporter ZIP2 from Homo sapiens (Human).